Consider the following 189-residue polypeptide: Probable nicotinate-nucleotide adenylyltransferase (189 aa).

This sequence belongs to the NadD family.

The catalysed reaction is nicotinate beta-D-ribonucleotide + ATP + H(+) = deamido-NAD(+) + diphosphate. It functions in the pathway cofactor biosynthesis; NAD(+) biosynthesis; deamido-NAD(+) from nicotinate D-ribonucleotide: step 1/1. Its function is as follows. Catalyzes the reversible adenylation of nicotinate mononucleotide (NaMN) to nicotinic acid adenine dinucleotide (NaAD). The chain is Probable nicotinate-nucleotide adenylyltransferase from Bacillus cereus (strain G9842).